Reading from the N-terminus, the 303-residue chain is Ribosomal protein L11 methyltransferase (303 aa).

The S-adenosyl-L-methionine site is built by Thr-144, Gly-165, Asp-187, and Asn-235.

The protein belongs to the methyltransferase superfamily. PrmA family.

It is found in the cytoplasm. The catalysed reaction is L-lysyl-[protein] + 3 S-adenosyl-L-methionine = N(6),N(6),N(6)-trimethyl-L-lysyl-[protein] + 3 S-adenosyl-L-homocysteine + 3 H(+). Functionally, methylates ribosomal protein L11. The chain is Ribosomal protein L11 methyltransferase from Prochlorococcus marinus (strain AS9601).